Reading from the N-terminus, the 398-residue chain is Probable purine permease 17 (398 aa).

The interval 1 to 26 is disordered; that stretch reads MEMSKASKQTTRHEESEHVQNPEPDQ. Residues 11 to 20 are compositionally biased toward basic and acidic residues; that stretch reads TRHEESEHVQ. A Phosphoserine modification is found at Ser-29. The next 10 membrane-spanning stretches (helical) occupy residues 43 to 63, 88 to 108, 127 to 147, 155 to 175, 183 to 203, 219 to 239, 258 to 278, 301 to 321, 332 to 352, and 355 to 375; these read ISVSLCLFLVLLGDSLVMLLL, WTQALIQNAAFPILIPLFFIF, LFFLYLSLGVLVAAHSKLFAL, GIFSLISTTQLIFTAVLTAII, WIIISILLTIVIYVLGTPDFG, WLAFSATIAFSLSLCLIQLGF, VLEMQICVAFVASVVCLVGLF, VLSLVGLALSWQVWAVGMIGL, VVHMCASPFVALFVVLAFDFM, and VFSWPRIGALIGTVLALGSYF.

The protein belongs to the purine permeases (TC 2.A.7.14) family.

Its subcellular location is the membrane. The protein is Probable purine permease 17 (PUP17) of Arabidopsis thaliana (Mouse-ear cress).